The following is a 317-amino-acid chain: Pantothenate kinase (317 aa).

101 to 108 is an ATP binding site; that stretch reads GSVAVGKS.

The protein belongs to the prokaryotic pantothenate kinase family.

It localises to the cytoplasm. The enzyme catalyses (R)-pantothenate + ATP = (R)-4'-phosphopantothenate + ADP + H(+). The protein operates within cofactor biosynthesis; coenzyme A biosynthesis; CoA from (R)-pantothenate: step 1/5. The chain is Pantothenate kinase from Actinobacillus succinogenes (strain ATCC 55618 / DSM 22257 / CCUG 43843 / 130Z).